Consider the following 173-residue polypeptide: uncharacterized protein (173 aa).

The tract at residues 1-23 (ELTSVAGSGRVDSTPLGSRGVTD) is disordered.

In terms of tissue distribution, component of the acid-insoluble and acid-soluble organic matrix of calcified layers of the shell (at protein level).

The protein resides in the secreted. This is an uncharacterized protein from Lottia gigantea (Giant owl limpet).